The sequence spans 247 residues: Protein At-4/1 (247 aa).

Coiled coils occupy residues 39-126 (VESS…YKIR) and 182-247 (LLME…LSSS).

As to quaternary structure, interacts with viral tomato spotted wilt virus (TSWV) movement protein NSM, which is involved in cell-to cell spread of viral genome and enlargement of the host plasmodesmata size exclusion limit (SEL). As to expression, expressed in leaves (at protein level).

It is found in the endoplasmic reticulum. The protein localises to the cell junction. Its subcellular location is the plasmodesma. In terms of biological role, involved in intra- and inter-cellular trafficking through plasmodesmata (PD). In Arabidopsis thaliana (Mouse-ear cress), this protein is Protein At-4/1.